The sequence spans 584 residues: Probable terpene synthase 9 (584 aa).

The Mg(2+) site is built by Asp-339, Asp-343, and Glu-491. A DDXXD motif motif is present at residues 339 to 343 (DDMYD).

This sequence belongs to the terpene synthase family. It depends on Mg(2+) as a cofactor.

In terms of biological role, probable sesquiterpene synthase. The protein is Probable terpene synthase 9 (TPS9) of Ricinus communis (Castor bean).